Consider the following 92-residue polypeptide: Large ribosomal subunit protein eL43y (92 aa).

Residues 39-60 (CEFCGKYGVKRKAVGIWGCKDC) form a C4-type zinc finger.

This sequence belongs to the eukaryotic ribosomal protein eL43 family.

The chain is Large ribosomal subunit protein eL43y (RPL37AC) from Arabidopsis thaliana (Mouse-ear cress).